We begin with the raw amino-acid sequence, 366 residues long: Protein RecA (366 aa).

81–88 (GPESSGKT) contacts ATP.

Belongs to the RecA family.

The protein localises to the cytoplasm. Can catalyze the hydrolysis of ATP in the presence of single-stranded DNA, the ATP-dependent uptake of single-stranded DNA by duplex DNA, and the ATP-dependent hybridization of homologous single-stranded DNAs. It interacts with LexA causing its activation and leading to its autocatalytic cleavage. The sequence is that of Protein RecA from Leptospira interrogans serogroup Icterohaemorrhagiae serovar copenhageni (strain Fiocruz L1-130).